The chain runs to 601 residues: Arginine--tRNA ligase (601 aa).

The 'HIGH' region motif lies at 133 to 143 (PNTNKPLHLGH).

It belongs to the class-I aminoacyl-tRNA synthetase family. Monomer.

Its subcellular location is the cytoplasm. It carries out the reaction tRNA(Arg) + L-arginine + ATP = L-arginyl-tRNA(Arg) + AMP + diphosphate. This is Arginine--tRNA ligase from Flavobacterium psychrophilum (strain ATCC 49511 / DSM 21280 / CIP 103535 / JIP02/86).